The primary structure comprises 105 residues: Late embryogenesis abundant protein Lea5-D (105 aa).

The segment at 48 to 67 is disordered; that stretch reads KVERRDAMKESSSSETRAYS. The span at 57-67 shows a compositional bias: low complexity; it reads ESSSSETRAYS.

It belongs to the LEA type 3 family.

In Gossypium hirsutum (Upland cotton), this protein is Late embryogenesis abundant protein Lea5-D (LEA5-D).